A 664-amino-acid polypeptide reads, in one-letter code: Prelamin-A/C (664 aa).

Position 1 is an N-acetylmethionine (Met1). The segment at 1–25 (METPSQRRATRSGAQASSTPLSPTR) is disordered. Residues 1-33 (METPSQRRATRSGAQASSTPLSPTRITRLQEKE) form a head region. The segment at 1–130 (METPSQRRAT…TKKEGDLIAA (130 aa)) is interaction with MLIP. Residue Thr3 is modified to Phosphothreonine. Ser5 bears the Phosphoserine mark. Position 10 is a phosphothreonine (Thr10). Ser12 and Ser18 each carry phosphoserine. Thr19 is modified (phosphothreonine). Phosphoserine; by CDK1 is present on Ser22. The IF rod domain occupies 31-387 (EKEDLQELND…KLLEGEEERL (357 aa)). Position 32 is an N6-acetyllysine; alternate (Lys32). Lys32 bears the N6-succinyllysine; alternate mark. Lys32 participates in a covalent cross-link: Glycyl lysine isopeptide (Lys-Gly) (interchain with G-Cter in SUMO2); alternate. The interval 34 to 70 (DLQELNDRLAVYIDRVRSLETENAGLRLRITESEEVV) is coil 1A. 3 positions are modified to phosphoserine: Ser51, Ser66, and Ser71. The segment at 71 to 80 (SREVSGIKAA) is linker 1. Residues Lys78 and Lys97 each carry the N6-acetyllysine modification. Positions 81-218 (YEAELGDARK…NIYSEELRET (138 aa)) are coil 1B. Lys97 is covalently cross-linked (Glycyl lysine isopeptide (Lys-Gly) (interchain with G-Cter in SUMO2)). Ser107 carries the post-translational modification Phosphoserine. N6-acetyllysine occurs at positions 108, 114, 123, 135, 144, and 155. Lys171 bears the N6-acetyllysine; alternate mark. An N6-succinyllysine; alternate modification is found at Lys171. Lys171 participates in a covalent cross-link: Glycyl lysine isopeptide (Lys-Gly) (interchain with G-Cter in SUMO2); alternate. N6-acetyllysine is present on residues Lys180, Lys201, and Lys208. Lys201 is covalently cross-linked (Glycyl lysine isopeptide (Lys-Gly) (interchain with G-Cter in SUMO2); alternate). Residue Lys201 forms a Glycyl lysine isopeptide (Lys-Gly) (interchain with G-Cter in SUMO); alternate linkage. Lys208 is covalently cross-linked (Glycyl lysine isopeptide (Lys-Gly) (interchain with G-Cter in SUMO2)). Ser212 is modified (phosphoserine). Residues Lys219 and Lys233 each participate in a glycyl lysine isopeptide (Lys-Gly) (interchain with G-Cter in SUMO2) cross-link. Residues 219 to 242 (KRRHETRLVEIDNGKQREFESRLA) form a linker 2 region. Lys233, Lys260, Lys265, and Lys270 each carry N6-acetyllysine. Residues 243 to 383 (DALQELRAQH…HAYRKLLEGE (141 aa)) are coil 2. The tract at residues 259–331 (YKKELEKTYS…DLEDSLARER (73 aa)) is necessary and sufficient for the interaction with IFFO1. A Glycyl lysine isopeptide (Lys-Gly) (interchain with G-Cter in SUMO2); alternate cross-link involves residue Lys260. Lys270 participates in a covalent cross-link: Glycyl lysine isopeptide (Lys-Gly) (interchain with G-Cter in SUMO2); alternate. At Ser277 the chain carries Phosphoserine. Phosphoserine; by ATR is present on Ser282. Phosphoserine occurs at positions 301 and 307. Lys311 participates in a covalent cross-link: Glycyl lysine isopeptide (Lys-Gly) (interchain with G-Cter in SUMO2); alternate. Residues Lys311, Lys316, and Lys341 each carry the N6-acetyllysine modification. Glycyl lysine isopeptide (Lys-Gly) (interchain with G-Cter in SUMO2) cross-links involve residues Lys366 and Lys378. A disordered region spans residues 384–442 (EERLRLSPSPTSQRSRGRASSHSSQTQGGGSVTKKRKLESTESRSSFSQHARTSGRVAV). Positions 384–664 (EERLRLSPSP…TQSPQNCSIM (281 aa)) are tail. Position 390 is a phosphoserine (Ser390). Residue Ser392 is modified to Phosphoserine; by CDK1. Ser395 carries the phosphoserine; by ATR modification. A phosphoserine mark is found at Ser398, Ser403, Ser404, Ser406, Ser407, and Ser414. Thr416 bears the Phosphothreonine mark. Residue Lys417 is modified to N6-acetyllysine. Residues Lys417 and Lys420 each participate in a glycyl lysine isopeptide (Lys-Gly) (interchain with G-Cter in SUMO2) cross-link. The Nuclear localization signal motif lies at 417–422 (KKRKLE). Phosphoserine occurs at positions 423, 426, 429, and 431. Over residues 426–435 (SRSSFSQHAR) the composition is skewed to polar residues. The LTD domain maps to 428–545 (SSFSQHARTS…EEVAMRKLVR (118 aa)). Lys450 is covalently cross-linked (Glycyl lysine isopeptide (Lys-Gly) (interchain with G-Cter in SUMO2); alternate). An N6-acetyllysine mark is found at Lys450 and Lys457. Residues Ser458 and Ser463 each carry the phosphoserine modification. Glycyl lysine isopeptide (Lys-Gly) (interchain with G-Cter in SUMO2) cross-links involve residues Lys470 and Lys486. Lys486 is modified (N6-acetyllysine). Phosphothreonine occurs at positions 496, 505, and 510. Ser533 and Ser546 each carry phosphoserine. Thr548 carries the phosphothreonine modification. Positions 552-576 (DDEDEDGDDLLHHHHGSHCSSSGDP) are disordered. Ser568 and Ser571 each carry phosphoserine. Lys597 is covalently cross-linked (Glycyl lysine isopeptide (Lys-Gly) (interchain with G-Cter in SUMO2); alternate). Lys597 is covalently cross-linked (Glycyl lysine isopeptide (Lys-Gly) (interchain with G-Cter in SUMO1); alternate). The disordered stretch occupies residues 598–619 (ASASGSGAQVGGPISSGSSASS). Phosphoserine is present on residues Ser612, Ser613, Ser616, and Ser619. O-linked (GlcNAc) serine glycans are attached at residues Ser625 and Ser628. Phosphoserine is present on residues Ser628, Ser632, Ser636, and Ser652. A propeptide spans 647–661 (LLGNSSPRTQSPQNC) (removed in Lamin-A/C form). Cys661 carries the post-translational modification Cysteine methyl ester. Residue Cys661 is the site of S-farnesyl cysteine attachment. Residues 662–664 (SIM) constitute a propeptide, removed in Prelamin-A/C form and in Lamin-A/C form.

Belongs to the intermediate filament family. As to quaternary structure, homodimer of lamin A and lamin C. Lamin dimers then assemble into dimeric head-to-tail polymers. Ultimately, two head-to-tail polymers assemble laterally into a protofilament with a uniformly shaped rod of 3.5 nm in diameter. Interacts with lamin-associated polypeptides IA, IB and TMPO-alpha, RB1 and with emerin. Interacts with SREBF1, SREBF2, SUN2 and TMEM43. Interacts with TMEM201. Proteolytically processed isoform A interacts with NARF. Interacts with SUN1. Interacts with MLIP. Interacts with DMPK; may regulate nuclear envelope stability. Interacts with SUV39H1; the interaction increases stability of SUV39H1. Interacts with SYNE2. Interacts with ITSN1 isoform 2. Interacts with IFFO1; enables the formation of an interior nucleoskeleton that is recruited to DNA double-strand breaks. In terms of assembly, interacts with EMD. Interacts (via C-terminus) with LEMD2 (via N-terminus) (in vitro). In terms of processing, proteolytic cleavage of the C-terminal of 18 residues of prelamin-A/C results in the production of lamin-A/C. The prelamin-A/C maturation pathway includes farnesylation of CAAX motif by protein farnesyltransferase (FNTA and FNTB), removal of the last three amino acids (-AAX) by RCE1/FACE2 and/or ZMPSTE24, methylation of the C-terminal cysteine by ICMT and endoproteolytic removal of the last 15 C-terminal amino acids by ZMPSTE24. Proteolytic cleavage requires prior farnesylation and methylation, and absence of these blocks cleavage. Farnesylation of prelamin-A/C facilitates nuclear envelope targeting. Post-translationally, phosphorylation plays a key role in lamin organization, subcellular localization and nuclear envelope disintegration. Phosphorylation by CDK1 at Ser-22 and Ser-392 at the onset of mitosis drives lamin disassembly and nuclear envelope breakdown. Phosphorylation at Ser-22 and Ser-392 during interphase promotes localization to the nucleoplasm and regulates lamina assembly. Phosphorylation at Ser-22, Ser-392 and Ser-628 during interphase causes redistribution between the nucleus and the cytoplasm. Phosphorylation at Ser-22 by CDK1 regulates matrix stiffness. Phosphorylation status of Ser-22 determines its localization between double-strand break (DSB) sites and the nuclear matrix. Phosphorylated by ATR at Ser-282 in response to DNA damage, leading to lamin disassembly and nuclear envelope rupture. Phosphorylation also regulates stability in micronuclei arising from genome instability: phosphorylation at Ser-395 by ATR in response to genome instability and double-stranded DNA breaks primes LMNA for subsequent phosphorylation at Ser-392 by CDK1 and micronuclei envelope rupture. The rupture of micronuclear envelope triggers the cGAS-STING pathway thereby activating the type I interferon response and innate immunity. In terms of processing, acetylation by KAT8 is required for nuclear architecture. Sumoylation is necessary for the localization to the nuclear envelope. As to expression, in the arteries, prelamin-A/C accumulation is not observed in young healthy vessels but is prevalent in medial vascular smooth muscle cells (VSMCs) from aged individuals and in atherosclerotic lesions, where it often colocalizes with senescent and degenerate VSMCs. Prelamin-A/C expression increases with age and disease. In normal aging, the accumulation of prelamin-A/C is caused in part by the down-regulation of ZMPSTE24/FACE1 in response to oxidative stress.

It localises to the nucleus lamina. The protein resides in the nucleus envelope. It is found in the nucleus. Its subcellular location is the nucleoplasm. The protein localises to the nucleus matrix. It localises to the nucleus speckle. Lamins are intermediate filament proteins that assemble into a filamentous meshwork, and which constitute the major components of the nuclear lamina, a fibrous layer on the nucleoplasmic side of the inner nuclear membrane. Lamins provide a framework for the nuclear envelope, bridging the nuclear envelope and chromatin, thereby playing an important role in nuclear assembly, chromatin organization, nuclear membrane and telomere dynamics. Lamin A and C also regulate matrix stiffness by conferring nuclear mechanical properties. The structural integrity of the lamina is strictly controlled by the cell cycle, as seen by the disintegration and formation of the nuclear envelope in prophase and telophase, respectively. Lamin A and C are present in equal amounts in the lamina of mammals. Also invoved in DNA repair: recruited by DNA repair proteins XRCC4 and IFFO1 to the DNA double-strand breaks (DSBs) to prevent chromosome translocation by immobilizing broken DNA ends. Required for normal development of peripheral nervous system and skeletal muscle and for muscle satellite cell proliferation. Required for osteoblastogenesis and bone formation. Also prevents fat infiltration of muscle and bone marrow, helping to maintain the volume and strength of skeletal muscle and bone. Required for cardiac homeostasis. Functionally, prelamin-A/C can accelerate smooth muscle cell senescence. It acts to disrupt mitosis and induce DNA damage in vascular smooth muscle cells (VSMCs), leading to mitotic failure, genomic instability, and premature senescence. The polypeptide is Prelamin-A/C (LMNA) (Homo sapiens (Human)).